We begin with the raw amino-acid sequence, 272 residues long: Ras-related protein RSR1 (272 aa).

GTP is bound at residue 10-17; it reads GAGGVGKS. An Effector region motif is present at residues 32 to 40; that stretch reads YDPTIEDSY. Residues 57-61 and 116-119 contribute to the GTP site; these read DTAGI and NKAD. The segment at 177–272 is disordered; it reads DARNQSQQFS…KKNASTCTIL (96 aa). 2 stretches are compositionally biased toward polar residues: residues 180–232 and 245–258; these read NQSQ…STPV and SGSSNRTGISATSQ. Cys-269 bears the Cysteine methyl ester mark. Cys-269 is lipidated: S-geranylgeranyl cysteine. A propeptide spans 270-272 (removed in mature form); that stretch reads TIL.

Belongs to the small GTPase superfamily. Ras family.

The protein localises to the cell membrane. It carries out the reaction GTP + H2O = GDP + phosphate + H(+). Its activity is regulated as follows. Alternates between an inactive form bound to GDP and an active form bound to GTP. Activated by a guanine nucleotide-exchange factor (GEF) and inactivated by a GTPase-activating protein (GAP). Its function is as follows. Ras-related protein which binds GDP/GTP and possesses intrinsic GTPase activity. Involved in development of cell polarity during the cell division cycle, and essential for bud emergence. This is Ras-related protein RSR1 from Saccharomyces cerevisiae (strain ATCC 204508 / S288c) (Baker's yeast).